Reading from the N-terminus, the 176-residue chain is MYGTTILSIRKDKSVIVIGDGQVSLGHTVIKSGAKKVRRLSSDSVIAGFAGATADAFTLFERLESKLDKHPGQLMRACVELAKDWRMDKYLRKLEAMMIVADKSISLVITGTGDVLEPEDGIAAIGSGGNFALSAAKALIDIKGISIEEIAKKAMKIAADICVYTNHNVVVEKIEG.

Residue Thr4 is part of the active site. The Na(+) site is built by Ala159, Cys162, and Thr165.

The protein belongs to the peptidase T1B family. HslV subfamily. In terms of assembly, a double ring-shaped homohexamer of HslV is capped on each side by a ring-shaped HslU homohexamer. The assembly of the HslU/HslV complex is dependent on binding of ATP.

It localises to the cytoplasm. The catalysed reaction is ATP-dependent cleavage of peptide bonds with broad specificity.. Allosterically activated by HslU binding. Its function is as follows. Protease subunit of a proteasome-like degradation complex believed to be a general protein degrading machinery. In Wolbachia sp. subsp. Brugia malayi (strain TRS), this protein is ATP-dependent protease subunit HslV.